A 222-amino-acid polypeptide reads, in one-letter code: Protein-L-isoaspartate O-methyltransferase (222 aa).

Residue Ser-65 is part of the active site.

This sequence belongs to the methyltransferase superfamily. L-isoaspartyl/D-aspartyl protein methyltransferase family.

It is found in the cytoplasm. The catalysed reaction is [protein]-L-isoaspartate + S-adenosyl-L-methionine = [protein]-L-isoaspartate alpha-methyl ester + S-adenosyl-L-homocysteine. Catalyzes the methyl esterification of L-isoaspartyl residues in peptides and proteins that result from spontaneous decomposition of normal L-aspartyl and L-asparaginyl residues. It plays a role in the repair and/or degradation of damaged proteins. The protein is Protein-L-isoaspartate O-methyltransferase of Chlorobium luteolum (strain DSM 273 / BCRC 81028 / 2530) (Pelodictyon luteolum).